The primary structure comprises 148 residues: 3-dehydroquinate dehydratase (148 aa).

Residue Y26 is the Proton acceptor of the active site. 3 residues coordinate substrate: N77, H83, and D90. H103 serves as the catalytic Proton donor. Substrate-binding positions include 104–105 (LS) and R114.

Belongs to the type-II 3-dehydroquinase family. As to quaternary structure, homododecamer.

The catalysed reaction is 3-dehydroquinate = 3-dehydroshikimate + H2O. The protein operates within metabolic intermediate biosynthesis; chorismate biosynthesis; chorismate from D-erythrose 4-phosphate and phosphoenolpyruvate: step 3/7. In terms of biological role, catalyzes a trans-dehydration via an enolate intermediate. This chain is 3-dehydroquinate dehydratase, found in Chlorobaculum tepidum (strain ATCC 49652 / DSM 12025 / NBRC 103806 / TLS) (Chlorobium tepidum).